A 1005-amino-acid chain; its full sequence is Ephrin type-A receptor 5 (1005 aa).

Residues 1–24 (MRGSGPRGAGRRRTQGRGGGGDTP) form a disordered region. A signal peptide spans 1–26 (MRGSGPRGAGRRRTQGRGGGGDTPRV). Residues 27–575 (PASLAGCYSA…GASNDQSQIP (549 aa)) lie on the Extracellular side of the membrane. An Eph LBD domain is found at 62–240 (EVNLLDSRTV…YYKKCPSVVR (179 aa)). Asn-266, Asn-301, Asn-371, Asn-425, Asn-438, and Asn-463 each carry an N-linked (GlcNAc...) asparagine glycan. Fibronectin type-III domains are found at residues 359–469 (PPSA…TNQA) and 470–564 (APSP…TTPV). Residues 576-596 (IIGVSVTVGVILLAVMIGFLL) form a helical membrane-spanning segment. Residues 597-1005 (SGSCCECGCG…MDAVAQVTLE (409 aa)) are Cytoplasmic-facing. Residues Tyr-652 and Tyr-658 each carry the phosphotyrosine; by autocatalysis modification. The Protein kinase domain maps to 677–938 (ITIERVIGAG…DIVNMLDKLI (262 aa)). Residues 683-691 (IGAGEFGEV) and Lys-709 each bind ATP. Catalysis depends on Asp-802, which acts as the Proton acceptor. Tyr-835 and Tyr-984 each carry phosphotyrosine; by autocatalysis. Residues 967-1005 (GAYRSVGEWLEATKMGRYTEIFMENGYSSMDAVAQVTLE) form the SAM domain.

Belongs to the protein kinase superfamily. Tyr protein kinase family. Ephrin receptor subfamily. Heterotetramer upon binding of the ligand. The heterotetramer is composed of an ephrin dimer and a receptor dimer. Oligomerization is probably required to induce biological responses. Interacts (via SAM domain) with SAMD5 (via SAM domain). Phosphorylated. Phosphorylation is stimulated by the ligand EFNA5. Dephosphorylation upon stimulation by glucose, inhibits EPHA5 forward signaling and results in insulin secretion. As to expression, almost exclusively expressed in the nervous system. Predominantly expressed in neurons.

The protein resides in the cell membrane. Its subcellular location is the cell projection. It is found in the axon. The protein localises to the dendrite. The catalysed reaction is L-tyrosyl-[protein] + ATP = O-phospho-L-tyrosyl-[protein] + ADP + H(+). Functionally, receptor tyrosine kinase which binds promiscuously GPI-anchored ephrin-A family ligands residing on adjacent cells, leading to contact-dependent bidirectional signaling into neighboring cells. The signaling pathway downstream of the receptor is referred to as forward signaling while the signaling pathway downstream of the ephrin ligand is referred to as reverse signaling. Among GPI-anchored ephrin-A ligands, EFNA5 most probably constitutes the cognate/functional ligand for EPHA5. Functions as an axon guidance molecule during development and may be involved in the development of the retinotectal, entorhino-hippocampal and hippocamposeptal pathways. Together with EFNA5 plays also a role in synaptic plasticity in adult brain through regulation of synaptogenesis. In addition to its function in the nervous system, the interaction of EPHA5 with EFNA5 mediates communication between pancreatic islet cells to regulate glucose-stimulated insulin secretion. This chain is Ephrin type-A receptor 5 (Epha5), found in Rattus norvegicus (Rat).